Consider the following 274-residue polypeptide: 2,3,4,5-tetrahydropyridine-2,6-dicarboxylate N-succinyltransferase (274 aa).

Substrate-binding residues include R104 and D141.

Belongs to the transferase hexapeptide repeat family. Homotrimer.

The protein localises to the cytoplasm. The enzyme catalyses (S)-2,3,4,5-tetrahydrodipicolinate + succinyl-CoA + H2O = (S)-2-succinylamino-6-oxoheptanedioate + CoA. It participates in amino-acid biosynthesis; L-lysine biosynthesis via DAP pathway; LL-2,6-diaminopimelate from (S)-tetrahydrodipicolinate (succinylase route): step 1/3. In Shewanella loihica (strain ATCC BAA-1088 / PV-4), this protein is 2,3,4,5-tetrahydropyridine-2,6-dicarboxylate N-succinyltransferase.